The following is a 703-amino-acid chain: DNA ligase (703 aa).

Residues 54–58, 103–104, and E132 contribute to the NAD(+) site; these read DAEYD and SL. K134 functions as the N6-AMP-lysine intermediate in the catalytic mechanism. NAD(+)-binding residues include R155, E192, K308, and K332. Positions 426, 429, 444, and 450 each coordinate Zn(2+). Residues 608-698 enclose the BRCT domain; the sequence is EGPGPLDGVV…ADAARALAVP (91 aa).

It belongs to the NAD-dependent DNA ligase family. LigA subfamily. It depends on Mg(2+) as a cofactor. Requires Mn(2+) as cofactor.

It carries out the reaction NAD(+) + (deoxyribonucleotide)n-3'-hydroxyl + 5'-phospho-(deoxyribonucleotide)m = (deoxyribonucleotide)n+m + AMP + beta-nicotinamide D-nucleotide.. DNA ligase that catalyzes the formation of phosphodiester linkages between 5'-phosphoryl and 3'-hydroxyl groups in double-stranded DNA using NAD as a coenzyme and as the energy source for the reaction. It is essential for DNA replication and repair of damaged DNA. In Parafrankia sp. (strain EAN1pec), this protein is DNA ligase.